We begin with the raw amino-acid sequence, 368 residues long: 2-aminoethylphosphonate--pyruvate transaminase (368 aa).

The residue at position 192 (lysine 192) is an N6-(pyridoxal phosphate)lysine.

Belongs to the class-V pyridoxal-phosphate-dependent aminotransferase family. PhnW subfamily. As to quaternary structure, homodimer. It depends on pyridoxal 5'-phosphate as a cofactor.

The enzyme catalyses (2-aminoethyl)phosphonate + pyruvate = phosphonoacetaldehyde + L-alanine. Its function is as follows. Involved in phosphonate degradation. This is 2-aminoethylphosphonate--pyruvate transaminase from Pseudomonas putida (strain GB-1).